The chain runs to 216 residues: 3-isopropylmalate dehydratase small subunit (216 aa).

It belongs to the LeuD family. LeuD type 1 subfamily. Heterodimer of LeuC and LeuD.

The enzyme catalyses (2R,3S)-3-isopropylmalate = (2S)-2-isopropylmalate. The protein operates within amino-acid biosynthesis; L-leucine biosynthesis; L-leucine from 3-methyl-2-oxobutanoate: step 2/4. In terms of biological role, catalyzes the isomerization between 2-isopropylmalate and 3-isopropylmalate, via the formation of 2-isopropylmaleate. In Marinomonas sp. (strain MWYL1), this protein is 3-isopropylmalate dehydratase small subunit.